Here is a 43-residue protein sequence, read N- to C-terminus: Potassium channel toxin gamma-KTx 4.8 (43 aa).

Intrachain disulfides connect Cys-5/Cys-23, Cys-11/Cys-34, Cys-20/Cys-39, and Cys-24/Cys-41.

It belongs to the ergtoxin family. Gamma-KTx 4 subfamily. Expressed by the venom gland.

Its subcellular location is the secreted. Its function is as follows. Reversibly blocks Kv11/ERG potassium channels. This is Potassium channel toxin gamma-KTx 4.8 from Centruroides elegans (Bark scorpion).